A 138-amino-acid polypeptide reads, in one-letter code: Protein FAM216B (138 aa).

It belongs to the FAM216 family.

This chain is Protein FAM216B (Fam216b), found in Mus musculus (Mouse).